The following is a 34-amino-acid chain: Photosystem II reaction center protein M (34 aa).

The helical transmembrane segment at 7-27 (GFVASLLFVLVPTVFLIILFI) threads the bilayer.

The protein belongs to the PsbM family. PSII is composed of 1 copy each of membrane proteins PsbA, PsbB, PsbC, PsbD, PsbE, PsbF, PsbH, PsbI, PsbJ, PsbK, PsbL, PsbM, PsbT, PsbX, PsbY, PsbZ, Psb30/Ycf12, peripheral proteins PsbO, CyanoQ (PsbQ), PsbU, PsbV and a large number of cofactors. It forms dimeric complexes.

Its subcellular location is the cellular thylakoid membrane. In terms of biological role, one of the components of the core complex of photosystem II (PSII). PSII is a light-driven water:plastoquinone oxidoreductase that uses light energy to abstract electrons from H(2)O, generating O(2) and a proton gradient subsequently used for ATP formation. It consists of a core antenna complex that captures photons, and an electron transfer chain that converts photonic excitation into a charge separation. This subunit is found at the monomer-monomer interface. This is Photosystem II reaction center protein M from Synechococcus sp. (strain WH7803).